Reading from the N-terminus, the 250-residue chain is Uridylate kinase (250 aa).

An ATP-binding site is contributed by 19–22 (KLSG). A UMP-binding site is contributed by Gly-61. ATP contacts are provided by Gly-62 and Arg-66. Residues Asp-81 and 142–149 (TGNPFFTT) each bind UMP. Positions 169, 170, 175, and 178 each coordinate ATP.

It belongs to the UMP kinase family. As to quaternary structure, homohexamer.

It is found in the cytoplasm. The catalysed reaction is UMP + ATP = UDP + ADP. The protein operates within pyrimidine metabolism; CTP biosynthesis via de novo pathway; UDP from UMP (UMPK route): step 1/1. Its activity is regulated as follows. Inhibited by UTP. Functionally, catalyzes the reversible phosphorylation of UMP to UDP. In Rhodospirillum rubrum (strain ATCC 11170 / ATH 1.1.1 / DSM 467 / LMG 4362 / NCIMB 8255 / S1), this protein is Uridylate kinase.